A 1502-amino-acid polypeptide reads, in one-letter code: Heme-responsive zinc finger transcription factor HAP1 (1502 aa).

Over residues 1-50 (MSNTPYNSSVPSIASMTQSSVSRSPNMHTATTPGANTSSNSPPLHMSSDS) the composition is skewed to polar residues. The disordered stretch occupies residues 1–56 (MSNTPYNSSVPSIASMTQSSVSRSPNMHTATTPGANTSSNSPPLHMSSDSSKIKRK). Residues C64, C67, C74, C81, C84, and C93 each coordinate Zn(2+). The zn(2)-C6 fungal-type DNA-binding region spans 64–93 (CTICRKRKVKCDKLRPHCQQCTKTGVAHLC). The stretch at 105–134 (EKELLKDNELKKLRERVKSLEKTLSKVHSS) forms a coiled coil. Residues 126–208 (KTLSKVHSSP…ANSSSLSISN (83 aa)) form a disordered region. Residues 130–142 (KVHSSPSSNSLKS) are compositionally biased toward low complexity. 2 stretches are compositionally biased toward polar residues: residues 143 to 152 (YNTPESSNLF) and 160 to 176 (TLVN…SHMH). Positions 177 to 208 (QQQQQQQQQEQQQDFSRSANANANSSSLSISN) are enriched in low complexity. A heme-responsive; required for HMC formation region spans residues 244–444 (KGDPYLKLLW…NTIPHHQPQS (201 aa)). HRM repeat units lie at residues 280-285 (KCPINH), 299-304 (KCPVDH), 323-328 (KCPVDH), 347-352 (RCPVDH), 389-394 (KCPVDH), and 415-420 (RCPIDH). Polar residues-rich tracts occupy residues 432–447 (STHN…SGSH) and 706–734 (QLNA…NPTL). Disordered regions lie at residues 432 to 458 (STHN…SRKH) and 706 to 767 (QLNA…KENQ). Positions 735–759 (NNNMSAATTNSSSRSGSADSRSGSN) are enriched in low complexity. Residues 1192–1197 (KCPVYQ) form an HRM 7 repeat. A disordered region spans residues 1384–1411 (TANTDTSANGSALSTLTSPQGSDLASNS). Positions 1388-1411 (DTSANGSALSTLTSPQGSDLASNS) are enriched in polar residues.

In terms of assembly, binds DNA as a homodimer. Interacts with SRO9 and YDJ1. In the absence of heme, binds to at least four cellular proteins, including YDJ1 and SRO9, forming a high-molecular-weight complex (HMC) which results in repression of its activity and dictates its DNA-binding specificity.

The protein localises to the nucleus. Functionally, regulation of oxygen dependent gene expression. It modulates the expression of Iso-1 (CYP1) and Iso-2 (CYP3) cytochrome c. In response to heme, promotes transcription of genes encoding functions required for respiration, controlling oxidative damage and repression of anaerobic genes. Binds to the sequence 5'-CGGNNNTNNCGG-3'. Is non-functional in terms of iso-1 cytochrome c expression in strain S288c and its derivatives. The chain is Heme-responsive zinc finger transcription factor HAP1 (HAP1) from Saccharomyces cerevisiae (strain ATCC 204508 / S288c) (Baker's yeast).